A 645-amino-acid polypeptide reads, in one-letter code: Envelope glycoprotein (645 aa).

Residues 1-33 (MESPAFSKPLKDKINPWGPLIIMGILVRAGASV) form the signal peptide. Positions 32–237 (SVQRDSPHQV…QVLNVGPRVP (206 aa)) are receptor-binding domain (RBD). Over 34 to 585 (QRDSPHQVFN…FNRSPWFTTL (552 aa)) the chain is Extracellular. 2 N-linked (GlcNAc...) asparagine; by host glycosylation sites follow: asparagine 43 and asparagine 58. 2 disulfides stabilise this stretch: cysteine 113/cysteine 130 and cysteine 122/cysteine 135. The interval 260-285 (RTPRPPPSGAASMVPGAPPPSQQPGT) is disordered. N-linked (GlcNAc...) asparagine; by host glycosylation is present at asparagine 301. 6 disulfide bridges follow: cysteine 311–cysteine 314, cysteine 311–cysteine 538, cysteine 341–cysteine 395, cysteine 360–cysteine 372, cysteine 402–cysteine 415, and cysteine 530–cysteine 537. A CXXC motif is present at residues 311-314 (CWLC). 2 N-linked (GlcNAc...) asparagine; by host glycosylation sites follow: asparagine 333 and asparagine 340. 2 N-linked (GlcNAc...) asparagine; by host glycosylation sites follow: asparagine 373 and asparagine 409. Positions 447-467 (VSLTLALLLGGLTMGGIAAGV) are fusion peptide. A coiled-coil region spans residues 490–510 (DLGALEKSVSALEKSLTSLSE). Positions 513–529 (LQNRRGLDLLFLKEGGL) are immunosuppression. The CX6CC signature appears at 530–538 (CAALKEECC). The helical transmembrane segment at 586 to 606 (ISTIMGPLIVLLLILLFGPCI) threads the bilayer. Cysteine 605 is lipidated: S-palmitoyl cysteine; by host. Topologically, residues 607–640 (LNRLVQFVKDRISVVQALVLTQQYHQLKSIDPEE) are cytoplasmic. Positions 630–633 (YHQL) match the YXXL motif; contains endocytosis signal motif.

As to quaternary structure, the mature envelope protein (Env) consists of a trimer of SU-TM heterodimers attached by a labile interchain disulfide bond. The activated Env consists of SU monomers and TM trimers. Specific enzymatic cleavages in vivo yield mature proteins. Envelope glycoproteins are synthesized as an inactive precursor that is N-glycosylated and processed likely by host cell furin or by a furin-like protease in the Golgi to yield the mature SU and TM proteins. The cleavage site between SU and TM requires the minimal sequence [KR]-X-[KR]-R. The R-peptide is released from the C-terminus of the cytoplasmic tail of the TM protein upon particle formation as a result of proteolytic cleavage by the viral protease. Cleavage of this peptide is required for TM to become fusogenic. Post-translationally, the CXXC motif is highly conserved across a broad range of retroviral envelope proteins. It is thought to participate in the formation of a labile disulfide bond possibly with the CX6CC motif present in the transmembrane protein. Isomerization of the intersubunit disulfide bond to an SU intrachain disulfide bond is thought to occur upon receptor recognition in order to allow membrane fusion. In terms of processing, the transmembrane protein is palmitoylated. The R-peptide is palmitoylated.

It is found in the virion membrane. The protein resides in the host cell membrane. Functionally, the surface protein (SU) attaches the virus to the host cell by binding to its receptor. This interaction activates a thiol in a CXXC motif of the C-terminal domain, where the other Cys residue participates in the formation of the intersubunit disulfide. The activated thiol will attack the disulfide and cause its isomerization into a disulfide isomer within the motif. This leads to SU displacement and TM refolding, and is thought to activate its fusogenic potential by unmasking its fusion peptide. Fusion occurs at the host cell plasma membrane. Its function is as follows. The transmembrane protein (TM) acts as a class I viral fusion protein. Under the current model, the protein has at least 3 conformational states: pre-fusion native state, pre-hairpin intermediate state, and post-fusion hairpin state. During viral and target cell membrane fusion, the coiled coil regions (heptad repeats) assume a trimer-of-hairpins structure, positioning the fusion peptide in close proximity to the C-terminal region of the ectodomain. The formation of this structure appears to drive apposition and subsequent fusion of viral and target cell membranes. Membranes fusion leads to delivery of the nucleocapsid into the cytoplasm. The chain is Envelope glycoprotein (env) from Homo sapiens (Human).